The chain runs to 394 residues: 1-deoxy-D-xylulose 5-phosphate reductoisomerase (394 aa).

Residues Thr12, Gly13, Ser14, Ile15, Lys39, Gln40, and Asn126 each coordinate NADPH. Lys127 is a 1-deoxy-D-xylulose 5-phosphate binding site. Glu128 is a binding site for NADPH. Mn(2+) is bound at residue Asp152. The 1-deoxy-D-xylulose 5-phosphate site is built by Ser153, Glu154, Ser183, and His206. Glu154 contributes to the Mn(2+) binding site. Gly212 serves as a coordination point for NADPH. The 1-deoxy-D-xylulose 5-phosphate site is built by Ser219, Asn224, Lys225, and Glu228. Glu228 provides a ligand contact to Mn(2+).

The protein belongs to the DXR family. Mg(2+) is required as a cofactor. Requires Mn(2+) as cofactor.

It carries out the reaction 2-C-methyl-D-erythritol 4-phosphate + NADP(+) = 1-deoxy-D-xylulose 5-phosphate + NADPH + H(+). It functions in the pathway isoprenoid biosynthesis; isopentenyl diphosphate biosynthesis via DXP pathway; isopentenyl diphosphate from 1-deoxy-D-xylulose 5-phosphate: step 1/6. Catalyzes the NADPH-dependent rearrangement and reduction of 1-deoxy-D-xylulose-5-phosphate (DXP) to 2-C-methyl-D-erythritol 4-phosphate (MEP). The protein is 1-deoxy-D-xylulose 5-phosphate reductoisomerase of Neisseria meningitidis serogroup A / serotype 4A (strain DSM 15465 / Z2491).